Here is a 393-residue protein sequence, read N- to C-terminus: Envelope glycoprotein D (393 aa).

The signal sequence occupies residues 1 to 25 (MGRLTSGVGTAALLVVAVGLRVVCA). An interaction with TNFRSF14 region spans residues 25–57 (AKYALADPSLKMADPNRFRGKNLPVLDQLTDPP). Residues 26 to 340 (KYALADPSLK…HAPAAPSNPG (315 aa)) are Virion surface-facing. Residue His64 coordinates Zn(2+). 3 disulfides stabilise this stretch: Cys91–Cys214, Cys131–Cys227, and Cys143–Cys152. N-linked (GlcNAc...) asparagine; by host glycans are attached at residues Asn119 and Asn146. Residue Asp240 coordinates Zn(2+). The interval 261-305 (LKIAGWHGPKPPYTSTLLPPELSDTTNATQPELVPEDPEDSALLE) is profusion. Residues 274–290 (TSTLLPPELSDTTNATQ) are compositionally biased toward polar residues. The interval 274–301 (TSTLLPPELSDTTNATQPELVPEDPEDS) is disordered. Asn287 carries an N-linked (GlcNAc...) asparagine; by host glycan. A helical membrane pass occupies residues 341 to 361 (LIIGALAGSTLAVLVIGGIAF). The Intravirion segment spans residues 362 to 393 (WVRRRAQMAPKRLRLPHIRDDDAPPSHQPLFY).

The protein belongs to the herpesviridae glycoprotein D family. Homodimer. Interacts with host receptor TNFRSF14. Interacts with host receptor NECTIN1. Interacts with host receptor NECTIN2. Interacts (via profusion domain) with gB; this interaction occurs in the absence of gH/gL. Interacts (via profusion domain) with gH/gL heterodimer; this interaction occurs in the absence of gB. Associates with the gB-gH/gL-gD complex. Interacts (via C-terminus) with UL11 tegument protein.

It is found in the virion membrane. In terms of biological role, envelope glycoprotein that binds to the host cell entry receptors NECTIN1 and TNFRSF14/HVEM, promoting the virus entry into host cells. May trigger fusion with host membrane, by recruiting the fusion machinery composed of gB and gH/gL. The chain is Envelope glycoprotein D (gD) from Human herpesvirus 2 (strain HG52) (HHV-2).